The following is a 218-amino-acid chain: Probable transaldolase (218 aa).

Catalysis depends on lysine 87, which acts as the Schiff-base intermediate with substrate.

Belongs to the transaldolase family. Type 3B subfamily.

The protein resides in the cytoplasm. The catalysed reaction is D-sedoheptulose 7-phosphate + D-glyceraldehyde 3-phosphate = D-erythrose 4-phosphate + beta-D-fructose 6-phosphate. It participates in carbohydrate degradation; pentose phosphate pathway; D-glyceraldehyde 3-phosphate and beta-D-fructose 6-phosphate from D-ribose 5-phosphate and D-xylulose 5-phosphate (non-oxidative stage): step 2/3. Its function is as follows. Transaldolase is important for the balance of metabolites in the pentose-phosphate pathway. In Parabacteroides distasonis (strain ATCC 8503 / DSM 20701 / CIP 104284 / JCM 5825 / NCTC 11152), this protein is Probable transaldolase.